A 333-amino-acid polypeptide reads, in one-letter code: tRNA N6-adenosine threonylcarbamoyltransferase (333 aa).

2 residues coordinate Fe cation: His111 and His115. Substrate is bound by residues Leu134–Gly138, Asp167, Gly180, and Asn272. Residue Asp300 coordinates Fe cation.

It belongs to the KAE1 / TsaD family. The cofactor is Fe(2+).

The protein localises to the cytoplasm. The enzyme catalyses L-threonylcarbamoyladenylate + adenosine(37) in tRNA = N(6)-L-threonylcarbamoyladenosine(37) in tRNA + AMP + H(+). In terms of biological role, required for the formation of a threonylcarbamoyl group on adenosine at position 37 (t(6)A37) in tRNAs that read codons beginning with adenine. Is involved in the transfer of the threonylcarbamoyl moiety of threonylcarbamoyl-AMP (TC-AMP) to the N6 group of A37, together with TsaE and TsaB. TsaD likely plays a direct catalytic role in this reaction. The chain is tRNA N6-adenosine threonylcarbamoyltransferase from Legionella pneumophila (strain Lens).